The primary structure comprises 315 residues: MTALDWRSALTADEQRSVRALVTATTAVDGVAPVGEQVLRELGQQRTEHLLVAGSRPGGPIIGYLNLSPPRGAGGAMAELVVHPQSRRRGIGTAMARAALAKTAGRNQFWAHGTLDPARATASALGLVGVRELIQMRRPLRDIPEPTIPDGVVIRTYAGTSDDAELLRVNNAAFAGHPEQGGWTAVQLAERRGEAWFDPDGLILAFGDSPRERPGRLLGFHWTKVHPDHPGLGEVYVLGVDPAAQRRGLGQMLTSIGIVSLARRLGGRKTLDPAVEPAVLLYVESDNVAAVRTYQSLGFTTYSVDTAYALAGTDN.

N-acetyltransferase domains are found at residues 4 to 141 and 152 to 315; these read LDWR…RPLR and VVIR…GTDN. Residue Glu36 coordinates 1D-myo-inositol 2-(L-cysteinylamino)-2-deoxy-alpha-D-glucopyranoside. Residues 80 to 82 and 88 to 93 contribute to the acetyl-CoA site; these read LVV and RRGIGT. 1D-myo-inositol 2-(L-cysteinylamino)-2-deoxy-alpha-D-glucopyranoside-binding residues include Glu179, Lys224, and Glu234. Residues 238 to 240 and 245 to 251 contribute to the acetyl-CoA site; these read LGV and QRRGLGQ. 1D-myo-inositol 2-(L-cysteinylamino)-2-deoxy-alpha-D-glucopyranoside is bound at residue Tyr282. Position 287–292 (287–292) interacts with acetyl-CoA; it reads NVAAVR.

This sequence belongs to the acetyltransferase family. MshD subfamily. As to quaternary structure, monomer.

The enzyme catalyses 1D-myo-inositol 2-(L-cysteinylamino)-2-deoxy-alpha-D-glucopyranoside + acetyl-CoA = mycothiol + CoA + H(+). Its function is as follows. Catalyzes the transfer of acetyl from acetyl-CoA to desacetylmycothiol (Cys-GlcN-Ins) to form mycothiol. The chain is Mycothiol acetyltransferase from Mycobacterium bovis (strain ATCC BAA-935 / AF2122/97).